The primary structure comprises 156 residues: Small ribosomal subunit protein uS7 (156 aa).

Belongs to the universal ribosomal protein uS7 family. As to quaternary structure, part of the 30S ribosomal subunit. Contacts proteins S9 and S11.

In terms of biological role, one of the primary rRNA binding proteins, it binds directly to 16S rRNA where it nucleates assembly of the head domain of the 30S subunit. Is located at the subunit interface close to the decoding center, probably blocks exit of the E-site tRNA. This chain is Small ribosomal subunit protein uS7, found in Nostoc punctiforme (strain ATCC 29133 / PCC 73102).